The primary structure comprises 101 residues: Small ribosomal subunit protein uS14A (101 aa).

Residues 31–74 (IRKPSTPEADRAAAQAALQRLPRDASPVRLRNRDAADGRPRGHL) are disordered. A compositionally biased stretch (basic and acidic residues) spans 61–70 (RNRDAADGRP).

This sequence belongs to the universal ribosomal protein uS14 family. In terms of assembly, part of the 30S ribosomal subunit. Contacts proteins S3 and S10.

Its function is as follows. Binds 16S rRNA, required for the assembly of 30S particles and may also be responsible for determining the conformation of the 16S rRNA at the A site. This chain is Small ribosomal subunit protein uS14A, found in Nocardia farcinica (strain IFM 10152).